The chain runs to 103 residues: Pyrimidine/purine nucleoside phosphorylase (103 aa).

This sequence belongs to the nucleoside phosphorylase PpnP family.

It catalyses the reaction a purine D-ribonucleoside + phosphate = a purine nucleobase + alpha-D-ribose 1-phosphate. The enzyme catalyses adenosine + phosphate = alpha-D-ribose 1-phosphate + adenine. It carries out the reaction cytidine + phosphate = cytosine + alpha-D-ribose 1-phosphate. The catalysed reaction is guanosine + phosphate = alpha-D-ribose 1-phosphate + guanine. It catalyses the reaction inosine + phosphate = alpha-D-ribose 1-phosphate + hypoxanthine. The enzyme catalyses thymidine + phosphate = 2-deoxy-alpha-D-ribose 1-phosphate + thymine. It carries out the reaction uridine + phosphate = alpha-D-ribose 1-phosphate + uracil. The catalysed reaction is xanthosine + phosphate = alpha-D-ribose 1-phosphate + xanthine. Functionally, catalyzes the phosphorolysis of diverse nucleosides, yielding D-ribose 1-phosphate and the respective free bases. Can use uridine, adenosine, guanosine, cytidine, thymidine, inosine and xanthosine as substrates. Also catalyzes the reverse reactions. The polypeptide is Pyrimidine/purine nucleoside phosphorylase (Geobacter sp. (strain M21)).